Here is a 303-residue protein sequence, read N- to C-terminus: Ribosomal RNA small subunit methyltransferase A (303 aa).

A compositionally biased stretch (low complexity) spans Met1–Ser19. The tract at residues Met1–Leu34 is disordered. His55, Leu57, Gly82, Glu104, Asp130, and Asn149 together coordinate S-adenosyl-L-methionine.

Belongs to the class I-like SAM-binding methyltransferase superfamily. rRNA adenine N(6)-methyltransferase family. RsmA subfamily.

It is found in the cytoplasm. The catalysed reaction is adenosine(1518)/adenosine(1519) in 16S rRNA + 4 S-adenosyl-L-methionine = N(6)-dimethyladenosine(1518)/N(6)-dimethyladenosine(1519) in 16S rRNA + 4 S-adenosyl-L-homocysteine + 4 H(+). Specifically dimethylates two adjacent adenosines (A1518 and A1519) in the loop of a conserved hairpin near the 3'-end of 16S rRNA in the 30S particle. May play a critical role in biogenesis of 30S subunits. This is Ribosomal RNA small subunit methyltransferase A from Gluconobacter oxydans (strain 621H) (Gluconobacter suboxydans).